A 286-amino-acid chain; its full sequence is Shikimate dehydrogenase (NADP(+)) (286 aa).

Shikimate contacts are provided by residues 22-24 and T69; that span reads SFS. The Proton acceptor role is filled by K73. E85 contributes to the NADP(+) binding site. Shikimate-binding residues include N94 and D109. NADP(+) is bound by residues 133–137, 157–162, and L231; these read GAGGA and NRTIDK. Residue Y233 coordinates shikimate. Position 254 (G254) interacts with NADP(+).

It belongs to the shikimate dehydrogenase family. As to quaternary structure, homodimer.

The catalysed reaction is shikimate + NADP(+) = 3-dehydroshikimate + NADPH + H(+). The protein operates within metabolic intermediate biosynthesis; chorismate biosynthesis; chorismate from D-erythrose 4-phosphate and phosphoenolpyruvate: step 4/7. Functionally, involved in the biosynthesis of the chorismate, which leads to the biosynthesis of aromatic amino acids. Catalyzes the reversible NADPH linked reduction of 3-dehydroshikimate (DHSA) to yield shikimate (SA). This chain is Shikimate dehydrogenase (NADP(+)), found in Alkaliphilus oremlandii (strain OhILAs) (Clostridium oremlandii (strain OhILAs)).